A 263-amino-acid chain; its full sequence is Small ribosomal subunit protein uS2 (263 aa).

Position 2 is an N-acetylserine (Ser-2). Positions 213–223 are enriched in low complexity; it reads NAAEEARAGAT. Positions 213–245 are disordered; that stretch reads NAAEEARAGATEETEEVVAEAETEWNTETNVED. Residues 224–245 show a composition bias toward acidic residues; it reads EETEEVVAEAETEWNTETNVED.

This sequence belongs to the universal ribosomal protein uS2 family. In terms of assembly, component of the small ribosomal subunit. Mature ribosomes consist of a small (40S) and a large (60S) subunit. The 40S subunit contains about 33 different proteins and 1 molecule of RNA (18S). The 60S subunit contains about 49 different proteins and 3 molecules of RNA (25S, 5.8S and 5S). Interacts with RPS21.

It is found in the cytoplasm. Required for the assembly and/or stability of the 40S ribosomal subunit. Required for the processing of the 20S rRNA-precursor to mature 18S rRNA in a late step of the maturation of 40S ribosomal subunits. The chain is Small ribosomal subunit protein uS2 from Clavispora lusitaniae (strain ATCC 42720) (Yeast).